We begin with the raw amino-acid sequence, 163 residues long: NADH-quinone oxidoreductase subunit I (163 aa).

4Fe-4S ferredoxin-type domains are found at residues 54–84 (LRRY…IESE) and 94–123 (IVYD…ETQI). [4Fe-4S] cluster is bound by residues Cys-64, Cys-67, Cys-70, Cys-74, Cys-103, Cys-106, Cys-109, and Cys-113.

This sequence belongs to the complex I 23 kDa subunit family. NDH-1 is composed of 14 different subunits. Subunits NuoA, H, J, K, L, M, N constitute the membrane sector of the complex. [4Fe-4S] cluster serves as cofactor.

The protein resides in the cell inner membrane. The catalysed reaction is a quinone + NADH + 5 H(+)(in) = a quinol + NAD(+) + 4 H(+)(out). NDH-1 shuttles electrons from NADH, via FMN and iron-sulfur (Fe-S) centers, to quinones in the respiratory chain. The immediate electron acceptor for the enzyme in this species is believed to be ubiquinone. Couples the redox reaction to proton translocation (for every two electrons transferred, four hydrogen ions are translocated across the cytoplasmic membrane), and thus conserves the redox energy in a proton gradient. In Ruthia magnifica subsp. Calyptogena magnifica, this protein is NADH-quinone oxidoreductase subunit I.